We begin with the raw amino-acid sequence, 30 residues long: NHYSYSSPPPPPVVSSPPPPYYYYSPPPPV.

13 positions are modified to 4-hydroxyproline: P8, P9, P10, P11, P12, P17, P18, P19, P20, P26, P27, P28, and P29.

In terms of processing, O-glycosylated.

The protein localises to the secreted. It is found in the cell wall. The sequence is that of 136 kDa hydroxyproline-rich cell wall glycoprotein, major component from Phaseolus vulgaris (Kidney bean).